Reading from the N-terminus, the 927-residue chain is DNA mismatch repair protein MutS (927 aa).

The tract at residues 44 to 80 is disordered; it reads DESLKRPRNRHKPTSVPSIPLDSESQEQLETADNDND. The span at 67–79 shows a compositional bias: acidic residues; that stretch reads ESQEQLETADNDN. Residue 725–732 coordinates ATP; the sequence is GPNASGKS.

Belongs to the DNA mismatch repair MutS family.

In terms of biological role, this protein is involved in the repair of mismatches in DNA. It is possible that it carries out the mismatch recognition step. This protein has a weak ATPase activity. This Prochlorococcus marinus (strain MIT 9303) protein is DNA mismatch repair protein MutS.